Consider the following 372-residue polypeptide: N-methyl-L-tryptophan oxidase (372 aa).

An FAD-binding site is contributed by aspartate 4–histidine 34. Cysteine 307 is subject to S-8alpha-FAD cysteine.

It belongs to the MSOX/MTOX family. MTOX subfamily. Monomer. The cofactor is FAD.

It catalyses the reaction N(alpha)-methyl-L-tryptophan + O2 + H2O = L-tryptophan + formaldehyde + H2O2. In terms of biological role, catalyzes the oxidative demethylation of N-methyl-L-tryptophan. The polypeptide is N-methyl-L-tryptophan oxidase (Salmonella arizonae (strain ATCC BAA-731 / CDC346-86 / RSK2980)).